Here is a 145-residue protein sequence, read N- to C-terminus: MLFFGFLLAFLSAVPGTEGEIIPRCELVKILREHGFEGFEGTTIADWICLVQHESDYNTEAYNNNGPSRDYGIFQINSKYWCNDGKTSGAVDGCHISCSELMTNDLEDDIKCAKKIARDAHGLTPWYGWKNHCEGRDLSSYVKGC.

The first 19 residues, 1–19, serve as a signal peptide directing secretion; sequence MLFFGFLLAFLSAVPGTEG. The region spanning 20–145 is the C-type lysozyme domain; sequence EIIPRCELVK…RDLSSYVKGC (126 aa). 4 disulfides stabilise this stretch: Cys25/Cys145, Cys49/Cys133, Cys82/Cys98, and Cys94/Cys112. Catalysis depends on residues Glu54 and Asp70.

This sequence belongs to the glycosyl hydrolase 22 family. Monomer.

It is found in the secreted. It carries out the reaction Hydrolysis of (1-&gt;4)-beta-linkages between N-acetylmuramic acid and N-acetyl-D-glucosamine residues in a peptidoglycan and between N-acetyl-D-glucosamine residues in chitodextrins.. Its function is as follows. Lysozymes have primarily a bacteriolytic function; those in tissues and body fluids are associated with the monocyte-macrophage system and enhance the activity of immunoagents. The chain is Lysozyme C (LYZ) from Opisthocomus hoazin (Hoatzin).